Consider the following 142-residue polypeptide: Protein-export protein SecB (142 aa).

Belongs to the SecB family. In terms of assembly, homotetramer, a dimer of dimers. One homotetramer interacts with 1 SecA dimer.

It is found in the cytoplasm. Its function is as follows. One of the proteins required for the normal export of preproteins out of the cell cytoplasm. It is a molecular chaperone that binds to a subset of precursor proteins, maintaining them in a translocation-competent state. It also specifically binds to its receptor SecA. The sequence is that of Protein-export protein SecB from Buchnera aphidicola subsp. Acyrthosiphon pisum (strain 5A).